Here is a 1322-residue protein sequence, read N- to C-terminus: Sal-like protein 1 (1322 aa).

The interval 1–41 (MSRRKQAKPQHFQSDPEVASLPRRDGDTEKGQPSRPTKSKD) is disordered. Over residues 22–41 (PRRDGDTEKGQPSRPTKSKD) the composition is skewed to basic and acidic residues. The C2H2-type 1; atypical zinc finger occupies 43–65 (HVCGRCCAEFFELSDLLLHKKSC). Positions 78-128 (PASPAKTFPPGPSLNDPDDQMKDAANKADQEDCSDLSEPKGLDREESMEVE) are disordered. Basic and acidic residues-rich tracts occupy residues 96 to 107 (DQMKDAANKADQ) and 114 to 124 (SEPKGLDREES). Residue lysine 440 forms a Glycyl lysine isopeptide (Lys-Gly) (interchain with G-Cter in SUMO2) linkage. C2H2-type zinc fingers lie at residues 450–472 (HKCR…LRSH) and 478–500 (FKCN…FQRH). Residues 578 to 659 (PIPISHSAAS…GGPGGTTFTN (82 aa)) are disordered. Polar residues predominate over residues 584 to 594 (SAASPQGSVKS). Serine 591, serine 594, and serine 596 each carry phosphoserine. Residues 629–645 (NMASSAVPTAGNSTLNS) are compositionally biased toward polar residues. Glycyl lysine isopeptide (Lys-Gly) (interchain with G-Cter in SUMO2) cross-links involve residues lysine 672, lysine 689, and lysine 700. 3 C2H2-type zinc fingers span residues 705-727 (NECI…YRTH), 733-755 (FKCK…YSVH), and 765-787 (HSCP…IRMH). 2 disordered regions span residues 789 to 855 (GGQI…SSPL) and 891 to 961 (SMEG…GLSP). A compositionally biased stretch (acidic residues) spans 819–832 (DLDNFSDENMEECP). Low complexity predominate over residues 842 to 855 (SADASQDSLSSSPL). Positions 898–935 (TNDSSSVGGDMESQSAGSPAISESTSSMQALSPSNSTQ) are enriched in polar residues. The segment covering 936–948 (EFHKSPGMEEKPQ) has biased composition (basic and acidic residues). Residue serine 940 is modified to Phosphoserine. Glycyl lysine isopeptide (Lys-Gly) (interchain with G-Cter in SUMO2) cross-links involve residues lysine 946 and lysine 981. C2H2-type zinc fingers lie at residues 1000–1022 (TACD…YRSH) and 1028–1050 (FICT…MLTH). Lysine 1085 participates in a covalent cross-link: Glycyl lysine isopeptide (Lys-Gly) (interchain with G-Cter in SUMO2). A disordered region spans residues 1094 to 1119 (VSPQDSKDAPTSHVPQGPLSSSATSP). 2 consecutive C2H2-type zinc fingers follow at residues 1133 to 1155 (HYCN…ERTH) and 1161 to 1183 (FACT…MGTH). Residues lysine 1218, lysine 1297, and lysine 1317 each participate in a glycyl lysine isopeptide (Lys-Gly) (interchain with G-Cter in SUMO2) cross-link.

The protein belongs to the sal C2H2-type zinc-finger protein family. As to quaternary structure, may associate with NuRD histone deacetylase complex (HDAC). Interacts with components of HDAC complex including HDAC1, HDAC2, RBBP4, RBPP7, MTA1 and MTA2. Interacts with CCNQ. Interacts with NSD2 (via PHD-type zinc fingers 1, 2 and 3). Expressed in the metanephric mesenchyme surrounding ureteric bud.

The protein localises to the nucleus. Transcriptional repressor involved in organogenesis. Plays an essential role in ureteric bud invasion during kidney development. The protein is Sal-like protein 1 (Sall1) of Mus musculus (Mouse).